Here is a 162-residue protein sequence, read N- to C-terminus: Probable metalloprotease y4jG (162 aa).

Residues 9 to 147 (TVALPRDCVS…YRLDAKANWN (139 aa)) form the MPN domain. The Zn(2+) site is built by His-94, His-96, and Asp-107.

This sequence belongs to the peptidase M67B family.

The sequence is that of Probable metalloprotease y4jG from Sinorhizobium fredii (strain NBRC 101917 / NGR234).